We begin with the raw amino-acid sequence, 402 residues long: Exodeoxyribonuclease 7 large subunit (402 aa).

This sequence belongs to the XseA family. Heterooligomer composed of large and small subunits.

The protein localises to the cytoplasm. The catalysed reaction is Exonucleolytic cleavage in either 5'- to 3'- or 3'- to 5'-direction to yield nucleoside 5'-phosphates.. Bidirectionally degrades single-stranded DNA into large acid-insoluble oligonucleotides, which are then degraded further into small acid-soluble oligonucleotides. This is Exodeoxyribonuclease 7 large subunit from Streptomyces coelicolor (strain ATCC BAA-471 / A3(2) / M145).